Consider the following 403-residue polypeptide: Phosphoglycerate kinase (403 aa).

Residues 21–23 (DFN), Arg-36, 59–62 (HLGR), Arg-118, and Arg-151 each bind substrate. ATP contacts are provided by residues Lys-202, Glu-328, and 354-357 (GGDS).

Belongs to the phosphoglycerate kinase family. Monomer.

The protein localises to the cytoplasm. It catalyses the reaction (2R)-3-phosphoglycerate + ATP = (2R)-3-phospho-glyceroyl phosphate + ADP. Its pathway is carbohydrate degradation; glycolysis; pyruvate from D-glyceraldehyde 3-phosphate: step 2/5. The protein is Phosphoglycerate kinase of Akkermansia muciniphila (strain ATCC BAA-835 / DSM 22959 / JCM 33894 / BCRC 81048 / CCUG 64013 / CIP 107961 / Muc).